Consider the following 194-residue polypeptide: Putative manganese efflux pump MntP (194 aa).

A run of 6 helical transmembrane segments spans residues 2 to 22 (ISII…AFAV), 43 to 63 (LWFG…ASTF), 67 to 87 (VTQF…GNMV), 111 to 131 (PLAV…AFMF), 137 to 157 (AFAI…GLHI), and 174 to 194 (GVVL…VIAF).

Belongs to the MntP (TC 9.B.29) family.

Its subcellular location is the cell membrane. Functionally, probably functions as a manganese efflux pump. This chain is Putative manganese efflux pump MntP, found in Bifidobacterium longum (strain DJO10A).